The chain runs to 299 residues: NmrA-like family domain-containing protein 1 (299 aa).

NADP(+)-binding positions include 11–16 (GGTGAQ), 37–41 (RNPRK), 58–59 (DQ), Gln62, 79–81 (TNY), Lys92, Lys133, and 155–158 (YFEN). An interaction with ASS1 region spans residues 153-189 (PCYFENLLSHFLPQKAPDGKSYLLSLPTGDVPMDGMS).

Belongs to the NmrA-type oxidoreductase family. In terms of assembly, homodimer. Interacts with ASS1. Interaction is enhanced by low NADPH/NADP(+) ratios, which results in inhibition of ASS1 activity.

It localises to the cytoplasm. Its subcellular location is the perinuclear region. The protein localises to the nucleus. Functionally, redox sensor protein. Undergoes restructuring and subcellular redistribution in response to changes in intracellular NADPH/NADP(+) levels. At low NADPH concentrations the protein is found mainly as a monomer, and binds argininosuccinate synthase (ASS1), the enzyme involved in nitric oxide synthesis. Association with ASS1 impairs its activity and reduces the production of nitric oxide, which subsecuently prevents apoptosis. Under normal NADPH concentrations, the protein is found as a dimer and hides the binding site for ASS1. The homodimer binds one molecule of NADPH. Has higher affinity for NADPH than for NADP(+). Binding to NADPH is necessary to form a stable dimer. This is NmrA-like family domain-containing protein 1 (NMRAL1) from Homo sapiens (Human).